A 329-amino-acid polypeptide reads, in one-letter code: Biotin synthase (329 aa).

Residues Phe48 to Arg278 form the Radical SAM core domain. Residues Cys66, Cys70, and Cys73 each contribute to the [4Fe-4S] cluster site. Positions 143 and 203 each coordinate [2Fe-2S] cluster.

This sequence belongs to the radical SAM superfamily. Biotin synthase family. As to quaternary structure, homodimer. It depends on [4Fe-4S] cluster as a cofactor. The cofactor is [2Fe-2S] cluster.

The catalysed reaction is (4R,5S)-dethiobiotin + (sulfur carrier)-SH + 2 reduced [2Fe-2S]-[ferredoxin] + 2 S-adenosyl-L-methionine = (sulfur carrier)-H + biotin + 2 5'-deoxyadenosine + 2 L-methionine + 2 oxidized [2Fe-2S]-[ferredoxin]. It functions in the pathway cofactor biosynthesis; biotin biosynthesis; biotin from 7,8-diaminononanoate: step 2/2. In terms of biological role, catalyzes the conversion of dethiobiotin (DTB) to biotin by the insertion of a sulfur atom into dethiobiotin via a radical-based mechanism. The polypeptide is Biotin synthase (Geotalea uraniireducens (strain Rf4) (Geobacter uraniireducens)).